The sequence spans 122 residues: Large ribosomal subunit protein uL18 (122 aa).

It belongs to the universal ribosomal protein uL18 family. As to quaternary structure, part of the 50S ribosomal subunit; part of the 5S rRNA/L5/L18/L25 subcomplex. Contacts the 5S and 23S rRNAs.

In terms of biological role, this is one of the proteins that bind and probably mediate the attachment of the 5S RNA into the large ribosomal subunit, where it forms part of the central protuberance. The protein is Large ribosomal subunit protein uL18 of Geobacter sp. (strain M21).